A 332-amino-acid chain; its full sequence is Acetyl-coenzyme A carboxylase carboxyl transferase subunit beta (332 aa).

A CoA carboxyltransferase N-terminal domain is found at 24 to 293; sequence LWIKCPDSGH…PEVIVESEPE (270 aa). A disordered region spans residues 288–332; it reads VESEPEPEPEPVVAEIIPPTSDLPVSAPAPAPVAAQTPAPAAPSA. The span at 298–332 shows a compositional bias: low complexity; it reads PVVAEIIPPTSDLPVSAPAPAPVAAQTPAPAAPSA.

The protein belongs to the AccD/PCCB family. Acetyl-CoA carboxylase is a heterohexamer composed of biotin carboxyl carrier protein (AccB), biotin carboxylase (AccC) and two subunits each of ACCase subunit alpha (AccA) and ACCase subunit beta (AccD).

It is found in the cytoplasm. The catalysed reaction is N(6)-carboxybiotinyl-L-lysyl-[protein] + acetyl-CoA = N(6)-biotinyl-L-lysyl-[protein] + malonyl-CoA. It participates in lipid metabolism; malonyl-CoA biosynthesis; malonyl-CoA from acetyl-CoA: step 1/1. Its function is as follows. Component of the acetyl coenzyme A carboxylase (ACC) complex. Biotin carboxylase (BC) catalyzes the carboxylation of biotin on its carrier protein (BCCP) and then the CO(2) group is transferred by the transcarboxylase to acetyl-CoA to form malonyl-CoA. The protein is Acetyl-coenzyme A carboxylase carboxyl transferase subunit beta of Rhodopseudomonas palustris (strain BisB18).